Consider the following 97-residue polypeptide: Large ribosomal subunit protein eL21 (97 aa).

The protein belongs to the eukaryotic ribosomal protein eL21 family.

The chain is Large ribosomal subunit protein eL21 from Methanospirillum hungatei JF-1 (strain ATCC 27890 / DSM 864 / NBRC 100397 / JF-1).